Here is an 823-residue protein sequence, read N- to C-terminus: Polyadenylation and cleavage factor homolog 11 (823 aa).

The CID domain occupies serine 3–aspartate 135. Disordered stretches follow at residues asparagine 142–threonine 176, serine 188–lysine 301, serine 340–proline 395, leucine 570–serine 643, and tryptophan 728–serine 755. Polar residues-rich tracts occupy residues alanine 157–threonine 176 and serine 188–lysine 198. Positions valine 200–aspartate 226 are enriched in basic and acidic residues. Low complexity-rich tracts occupy residues lysine 227 to alanine 242 and alanine 342 to proline 353. Over residues proline 374 to glutamine 390 the composition is skewed to pro residues. Low complexity predominate over residues proline 571–arginine 581. The span at glutamine 609–asparagine 624 shows a compositional bias: polar residues.

This is Polyadenylation and cleavage factor homolog 11 (pcf-11) from Caenorhabditis elegans.